The following is a 513-amino-acid chain: Na(+)/H(+) antiporter NhaB (513 aa).

12 helical membrane-spanning segments follow: residues 23–43 (LALIIFLIVNPLIFLISPFVA), 52–72 (IFTLAMALKCYPLLPGGLLAI), 97–117 (LLLMFMVAGIYFMKQLLLFIF), 120–140 (LLLSIRSKMLLSLSFCVAAAF), 144–164 (FLDALTVVAVVISVAVGFYGI), 202–222 (LMMHAGVGTALGGVMTMVGEP), 238–258 (FFLRMSPVTVPVLICGLLTCL), 303–323 (AIIGVWLVTALALHLAEVGLI), 348–368 (TESLPFTALLTVFFSVVAVII), 391–411 (LFYIFNGLLSSISDNVFVGTI), 447–467 (ATPNGQAAFLFLLTSALAPLI), and 475–495 (VWMALPYTLVLTLVGLLCVEF).

This sequence belongs to the NhaB Na(+)/H(+) (TC 2.A.34) antiporter family.

It localises to the cell inner membrane. It carries out the reaction 2 Na(+)(in) + 3 H(+)(out) = 2 Na(+)(out) + 3 H(+)(in). Functionally, na(+)/H(+) antiporter that extrudes sodium in exchange for external protons. This is Na(+)/H(+) antiporter NhaB from Shigella flexneri serotype 5b (strain 8401).